Reading from the N-terminus, the 287-residue chain is ATP synthase gamma chain (287 aa).

Belongs to the ATPase gamma chain family. In terms of assembly, F-type ATPases have 2 components, CF(1) - the catalytic core - and CF(0) - the membrane proton channel. CF(1) has five subunits: alpha(3), beta(3), gamma(1), delta(1), epsilon(1). CF(0) has three main subunits: a, b and c.

The protein localises to the cell membrane. Its function is as follows. Produces ATP from ADP in the presence of a proton gradient across the membrane. The gamma chain is believed to be important in regulating ATPase activity and the flow of protons through the CF(0) complex. This chain is ATP synthase gamma chain, found in Bacillus caldotenax.